The chain runs to 298 residues: Acetylglutamate kinase (298 aa).

Substrate contacts are provided by residues 69–70 (GG), R91, and N196.

This sequence belongs to the acetylglutamate kinase family. ArgB subfamily.

It is found in the cytoplasm. It carries out the reaction N-acetyl-L-glutamate + ATP = N-acetyl-L-glutamyl 5-phosphate + ADP. It functions in the pathway amino-acid biosynthesis; L-arginine biosynthesis; N(2)-acetyl-L-ornithine from L-glutamate: step 2/4. In terms of biological role, catalyzes the ATP-dependent phosphorylation of N-acetyl-L-glutamate. In Bradyrhizobium sp. (strain ORS 278), this protein is Acetylglutamate kinase.